Reading from the N-terminus, the 257-residue chain is UPF0246 protein Spea_1078 (257 aa).

This sequence belongs to the UPF0246 family.

In Shewanella pealeana (strain ATCC 700345 / ANG-SQ1), this protein is UPF0246 protein Spea_1078.